The chain runs to 76 residues: Tautomerase PptA (76 aa).

The active-site Proton acceptor; via imino nitrogen is the proline 2.

The protein belongs to the 4-oxalocrotonate tautomerase family. PptA subfamily. In terms of assembly, homodimer.

Its subcellular location is the cytoplasm. The sequence is that of Tautomerase PptA from Pectobacterium atrosepticum (strain SCRI 1043 / ATCC BAA-672) (Erwinia carotovora subsp. atroseptica).